The sequence spans 365 residues: IgG receptor FcRn large subunit p51 (365 aa).

An N-terminal signal peptide occupies residues 1-21 (MGMPLPWALSLLLVLLPQTWG). The alpha-1 stretch occupies residues 22–110 (SETRPPLMYH…KTLEKILNGT (89 aa)). Topologically, residues 22 to 297 (SETRPPLMYH…VDLDSSARSS (276 aa)) are extracellular. Residues asparagine 108, asparagine 125, asparagine 149, and asparagine 246 are each glycosylated (N-linked (GlcNAc...) asparagine). The tract at residues 111-200 (YTLQGLLGCE…ERGRRNLEWK (90 aa)) is alpha-2. Disulfide bonds link cysteine 119/cysteine 182 and cysteine 221/cysteine 275. The interval 201–290 (EPPSMRLKAR…GLAQPLTVDL (90 aa)) is alpha-3. One can recognise an Ig-like C1-type domain in the interval 202–289 (PPSMRLKARP…EGLAQPLTVD (88 aa)). The tract at residues 291–297 (DSSARSS) is connecting peptide. Residues 298-321 (VPVVGIVLGLLLVVVAIAGGVLLW) form a helical membrane-spanning segment. Residues 322-365 (GRMRSGLPAPWLSLSGDDSGDLLPGGNLPPEAEPQGANAFPATS) are Cytoplasmic-facing. Position 334 is a phosphoserine (serine 334). Positions 343 to 365 (LLPGGNLPPEAEPQGANAFPATS) are disordered.

It belongs to the immunoglobulin superfamily. In terms of assembly, fcRn complex consists of two subunits: p51, and p14 which is equivalent to beta-2-microglobulin. It forms an MHC class I-like heterodimer. Interacts with albumin/ALB; this interaction regulates ALB homeostasis. As to expression, intestinal epithelium of suckling rodents. Expressed in neonatal intestine and fetal yolk sac.

Its subcellular location is the cell membrane. The protein localises to the endosome membrane. Functionally, cell surface receptor that transfers passive humoral immunity from the mother to the newborn. Binds to the Fc region of monomeric immunoglobulin gamma and mediates its selective uptake from milk. IgG in the milk is bound at the apical surface of the intestinal epithelium. The resultant FcRn-IgG complexes are transcytosed across the intestinal epithelium and IgG is released from FcRn into blood or tissue fluids. Throughout life, contributes to effective humoral immunity by recycling IgG and extending its half-life in the circulation. Mechanistically, monomeric IgG binding to FcRn in acidic endosomes of endothelial and hematopoietic cells recycles IgG to the cell surface where it is released into the circulation. In addition of IgG, regulates homeostasis of the other most abundant circulating protein albumin/ALB. This chain is IgG receptor FcRn large subunit p51 (Fcgrt), found in Mus musculus (Mouse).